The following is a 154-amino-acid chain: Urease accessory protein UreE (154 aa).

It belongs to the UreE family.

It localises to the cytoplasm. Its function is as follows. Involved in urease metallocenter assembly. Binds nickel. Probably functions as a nickel donor during metallocenter assembly. This is Urease accessory protein UreE from Prochlorococcus marinus subsp. pastoris (strain CCMP1986 / NIES-2087 / MED4).